The chain runs to 383 residues: Lipid-A-disaccharide synthase (383 aa).

It belongs to the LpxB family.

The enzyme catalyses 2-N,3-O-bis[(3R)-3-hydroxytetradecanoyl]-alpha-D-glucosaminyl 1-phosphate + UDP-2-N,3-O-bis[(3R)-3-hydroxytetradecanoyl]-alpha-D-glucosamine = lipid A disaccharide (E. coli) + UDP + H(+). It carries out the reaction a lipid X + a UDP-2-N,3-O-bis[(3R)-3-hydroxyacyl]-alpha-D-glucosamine = a lipid A disaccharide + UDP + H(+). Its pathway is glycolipid biosynthesis; lipid IV(A) biosynthesis; lipid IV(A) from (3R)-3-hydroxytetradecanoyl-[acyl-carrier-protein] and UDP-N-acetyl-alpha-D-glucosamine: step 5/6. Condensation of UDP-2,3-diacylglucosamine and 2,3-diacylglucosamine-1-phosphate to form lipid A disaccharide, a precursor of lipid A, a phosphorylated glycolipid that anchors the lipopolysaccharide to the outer membrane of the cell. This Klebsiella pneumoniae (strain 342) protein is Lipid-A-disaccharide synthase.